Reading from the N-terminus, the 147-residue chain is Protein-export protein SecB 2 (147 aa).

It belongs to the SecB family. Homotetramer, a dimer of dimers. One homotetramer interacts with 1 SecA dimer.

Its subcellular location is the cytoplasm. One of the proteins required for the normal export of preproteins out of the cell cytoplasm. It is a molecular chaperone that binds to a subset of precursor proteins, maintaining them in a translocation-competent state. It also specifically binds to its receptor SecA. The protein is Protein-export protein SecB 2 of Francisella tularensis subsp. novicida (strain U112).